Here is a 500-residue protein sequence, read N- to C-terminus: E3 ubiquitin-protein ligase TRIM69 (500 aa).

The interval 1 to 152 (MEVSTNPSSN…SVGQSKEFLQ (152 aa)) is necessary for nuclear localization. Residues 41–82 (CPLCNDWFRDPLMLSCGHNFCEACIQDFWRLQAKETFCPECK) form an RING-type zinc finger. The stretch at 161–255 (TEELAIQQGQ…QCLLAKDMLV (95 aa)) forms a coiled coil. Residues 305–500 (PIQYMVWREM…KEPLHILHPQ (196 aa)) form the B30.2/SPRY domain. Ser341 is modified (phosphoserine).

The protein belongs to the TRIM/RBCC family. Homo-multimer; required for antiviral activity. Interacts with PML. In terms of processing, phosphorylated. Phosphorylation is necessary for nuclear localization.

The protein resides in the cytoplasm. It is found in the nucleus. It localises to the nucleus speckle. Its subcellular location is the cytoskeleton. The protein localises to the microtubule organizing center. The protein resides in the centrosome. It carries out the reaction S-ubiquitinyl-[E2 ubiquitin-conjugating enzyme]-L-cysteine + [acceptor protein]-L-lysine = [E2 ubiquitin-conjugating enzyme]-L-cysteine + N(6)-ubiquitinyl-[acceptor protein]-L-lysine.. Its pathway is protein modification; protein ubiquitination. Its function is as follows. E3 ubiquitin ligase that plays an important role in antiviral immunity by restricting different viral infections including dengue virus or vesicular stomatitis indiana virus. Ubiquitinates viral proteins such as dengue virus NS3 thereby limiting infection. In addition, acts as a key mediator of type I interferon induced microtubule stabilization by directly associating to microtubules independently of its E3 ligase activity. Also plays a role in cataract formation together with TP53. Mechanistically, inhibits UVB-induced cell apoptosis and reactive oxygen species (ROS) production by inducing TP53 ubiquitination. Regulates centrosome dynamics and mitotic progression by ubiquitinating STK3/MST2; leading to its redistribution to the perinuclear cytoskeleton and subsequent phosphorylation by PLK1. This is E3 ubiquitin-protein ligase TRIM69 (TRIM69) from Homo sapiens (Human).